The primary structure comprises 221 residues: MNVSTSTFQTRRRRLKKVEEEENAATLQLGQEFQLKQINHQGEEEELIALNLSEARLVIKEALVERRRAFKRSQKKHKKKHLKHENANDETTAVEDEDDDLDEDDVNADDDDFMHSETREKELESIDVLLEQTTGGNNKDLKNTMQYLTNFSRFRDQETVGAVIQLLKSTGLHPFEVAQLGSLACDTADEAKTLIPSLNNKISDDELERILKELSNLETLY.

M1 bears the N-acetylmethionine mark. Disordered regions lie at residues 1-23 and 71-120; these read MNVSTSTFQTRRRRLKKVEEEEN and KRSQ…ETRE. Residues 71-83 are compositionally biased toward basic residues; sequence KRSQKKHKKKHLK. Phosphothreonine occurs at positions 91 and 92. Positions 92–112 are enriched in acidic residues; sequence TAVEDEDDDLDEDDVNADDDD.

This sequence belongs to the eukaryotic RPB4 RNA polymerase subunit family. In terms of assembly, component of the RNA polymerase II (Pol II) complex consisting of 12 subunits. RPB4 and RPB7 form a dissociable subcomplex associated with the 10-subunit Pol II core complex. In exponentially proliferating cells, only approximately 20 % of the Pol II complexes contain the RPB4-RPB7 subcomplex. In starving cells, that enter stationary phase, RPB4-RPB7 is associated with Pol II in a stoechiometric manner. The RPB4-RPB7 subcomplex probably associates with TFG1. Interacts with LSM2 and PAT1.

The protein resides in the nucleus. It is found in the cytoplasm. The protein localises to the P-body. In terms of biological role, DNA-dependent RNA polymerase catalyzes the transcription of DNA into RNA using the four ribonucleoside triphosphates as substrates. Component of RNA polymerase II which synthesizes mRNA precursors and many functional non-coding RNAs. Pol II is the central component of the basal RNA polymerase II transcription machinery. It is composed of mobile elements that move relative to each other. RPB4 is part of a subcomplex with RPB7 that binds to a pocket formed by RPB1, RPB2 and RPB6 at the base of the clamp element. The RPB4-RPB7 subcomplex seems to lock the clamp via RPB7 in the closed conformation thus preventing double-stranded DNA to enter the active site cleft. The RPB4-RPB7 subcomplex binds single-stranded DNA and RNA. The RPB4-RPB7 subcomplex is necessary for promoter-directed transcription initiation but is not required for recruitment of Pol II to active preinitiation complexes and seems to be dispensable for transcription elongation and termination. The RPB4-RPB7 subcomplex recruits FCP1 to Pol II. Involved in DNA repair of damage in the transcribed strand. RPB4 is dispensable under optimal growth conditions, but becomes essential during heat or cold shock and under nutrient depletion. Suppresses the RBP9-mediated transcription-coupled repair (TCR) subpathway of nucleotide excision repair (NER) but facilitates the RAD26-mediated TCR subpathway. Under stress conditions only, involved in mRNA export to the cytoplasm. Involved in mRNA decay. Promotes or enhances the deadenylation process of specific mRNAs and may recruit PAT1 and the LSM1-7 complex to these mRNAs, thus stimulating their decapping and further decay. This chain is DNA-directed RNA polymerase II subunit RPB4 (RPB4), found in Saccharomyces cerevisiae (strain ATCC 204508 / S288c) (Baker's yeast).